We begin with the raw amino-acid sequence, 427 residues long: Transcription factor MYB98 (427 aa).

The Nuclear localization signal 1 signature appears at 195–202 (TRKLSSSS). 2 HTH myb-type domains span residues 212-267 (KSTL…RPDI) and 268-318 (KKET…RRQF). 2 DNA-binding regions (H-T-H motif) span residues 240–263 (WSHI…HNHL) and 291–314 (WAEI…NATK). A Nuclear localization signal 2 motif is present at residues 361-368 (NKKKDVVV).

Expressed at high levels in the synergid cells of the female gametophyte, and at lower levels in the endosperm of young seeds and the trichomes of young leaves and sepals.

It localises to the nucleus. In terms of biological role, transcription factor that binds to the motif 5'-GTAACNT-3' in the promoter of target genes (e.g. DD11 and DD18) and promotes their expression within synergid cells (e.g. in the filiform apparatus) in ovules. Required for the formation of the filiform apparatus during synergid cell differentiation in the female gametophyte. Involved in pollen tube guidance to the micropyle. The polypeptide is Transcription factor MYB98 (Arabidopsis thaliana (Mouse-ear cress)).